A 210-amino-acid chain; its full sequence is Flagellar transcriptional regulator FlhC (210 aa).

4 residues coordinate Zn(2+): Cys144, Cys147, Cys164, and Cys167.

It belongs to the FlhC family. As to quaternary structure, heterohexamer composed of two FlhC and four FlhD subunits. Each FlhC binds a FlhD dimer, forming a heterotrimer, and a hexamer assembles by dimerization of two heterotrimers. Requires Zn(2+) as cofactor.

The protein localises to the cytoplasm. In terms of biological role, functions in complex with FlhD as a master transcriptional regulator that regulates transcription of several flagellar and non-flagellar operons by binding to their promoter region. Activates expression of class 2 flagellar genes, including fliA, which is a flagellum-specific sigma factor that turns on the class 3 genes. Also regulates genes whose products function in a variety of physiological pathways. This is Flagellar transcriptional regulator FlhC from Cupriavidus pinatubonensis (strain JMP 134 / LMG 1197) (Cupriavidus necator (strain JMP 134)).